The chain runs to 167 residues: Protein-export protein SecB (167 aa).

Positions 1–20 are disordered; that stretch reads MASNDDAPVGAANGNGNTGA.

This sequence belongs to the SecB family. As to quaternary structure, homotetramer, a dimer of dimers. One homotetramer interacts with 1 SecA dimer.

It localises to the cytoplasm. In terms of biological role, one of the proteins required for the normal export of preproteins out of the cell cytoplasm. It is a molecular chaperone that binds to a subset of precursor proteins, maintaining them in a translocation-competent state. It also specifically binds to its receptor SecA. This is Protein-export protein SecB from Mesorhizobium japonicum (strain LMG 29417 / CECT 9101 / MAFF 303099) (Mesorhizobium loti (strain MAFF 303099)).